Consider the following 99-residue polypeptide: DNA-directed RNA polymerase subunit omega (99 aa).

This sequence belongs to the RNA polymerase subunit omega family. As to quaternary structure, the RNAP catalytic core consists of 2 alpha, 1 beta, 1 beta' and 1 omega subunit. When a sigma factor is associated with the core the holoenzyme is formed, which can initiate transcription.

The catalysed reaction is RNA(n) + a ribonucleoside 5'-triphosphate = RNA(n+1) + diphosphate. Its function is as follows. Promotes RNA polymerase assembly. Latches the N- and C-terminal regions of the beta' subunit thereby facilitating its interaction with the beta and alpha subunits. The chain is DNA-directed RNA polymerase subunit omega (rpoZ) from Deinococcus radiodurans (strain ATCC 13939 / DSM 20539 / JCM 16871 / CCUG 27074 / LMG 4051 / NBRC 15346 / NCIMB 9279 / VKM B-1422 / R1).